The chain runs to 446 residues: MGKNVLLLGSGFVAQPVIDTLAANDDINVTVACRTLANAQALAKPSGSKAISLDVTDDSALDKVLADNDVVISLIPYTFHPNVVKSAIRTKTDVVTSSYISPALRELEPEIVKAGITVMNEIGLDPGIDHLYAVKTIDEVHRAGGKLKSFLSYCGGLPAPEDSDNPLGYKFSWSSRGVLLALRNSAKYWKDGKIETVSSEDLMATAKPYFIYPGYAFVCYPNRDSTLFKDLYHIPEAETVIRGTLRYQGFPEFVKALVDMGMLKDDANEIFSKPIAWNEALKQYLGAKSTSKEDLIASIDSKATWKDDEDRERILSGFAWLGLFSDAKITPRGNALDTLCARLEELMQYEDNERDMVVLQHKFGIEWADGTTETRTSTLVDYGKVGGYSSMAATVGYPVAIATKFVLDGTIKGPGLLAPYSPEINDPIMKELKDKYGIYLKEKTVA.

NADP(+) is bound by residues 10–13 (SGFV), 33–35 (CRT), 54–55 (DV), isoleucine 75, 97–98 (SS), 124–126 (LDP), and serine 174. Residues 98-99 (SY) and aspartate 125 each bind L-saccharopine. L-saccharopine contacts are provided by residues arginine 223 and 244 to 246 (TLR).

The protein belongs to the saccharopine dehydrogenase family. As to quaternary structure, interacts with TRM112.

The enzyme catalyses L-saccharopine + NADP(+) + H2O = (S)-2-amino-6-oxohexanoate + L-glutamate + NADPH + H(+). It functions in the pathway amino-acid biosynthesis; L-lysine biosynthesis via AAA pathway; L-lysine from L-alpha-aminoadipate (fungal route): step 2/3. In Saccharomyces cerevisiae (strain ATCC 204508 / S288c) (Baker's yeast), this protein is Saccharopine dehydrogenase [NADP(+), L-glutamate-forming] (LYS9).